The following is a 75-amino-acid chain: Translation initiation factor IF-1, chloroplastic (75 aa).

The S1-like domain maps to methionine 1 to serine 72.

It belongs to the IF-1 family. Component of the 30S ribosomal translation pre-initiation complex which assembles on the 30S ribosome in the order IF-2 and IF-3, IF-1 and N-formylmethionyl-tRNA(fMet); mRNA recruitment can occur at any time during PIC assembly.

It localises to the plastid. It is found in the chloroplast. One of the essential components for the initiation of protein synthesis. Stabilizes the binding of IF-2 and IF-3 on the 30S subunit to which N-formylmethionyl-tRNA(fMet) subsequently binds. Helps modulate mRNA selection, yielding the 30S pre-initiation complex (PIC). Upon addition of the 50S ribosomal subunit IF-1, IF-2 and IF-3 are released leaving the mature 70S translation initiation complex. The polypeptide is Translation initiation factor IF-1, chloroplastic (Pinus koraiensis (Korean pine)).